Reading from the N-terminus, the 193-residue chain is NAD(P)H-quinone oxidoreductase subunit I (193 aa).

4Fe-4S ferredoxin-type domains are found at residues 56-85 and 96-125; these read GRIH…VDWE and KHYS…MTEE. 8 residues coordinate [4Fe-4S] cluster: Cys65, Cys68, Cys71, Cys75, Cys105, Cys108, Cys111, and Cys115. The segment at 174 to 193 is disordered; sequence NLPKGSQRAGQHPEDLVKAE. The segment covering 184–193 has biased composition (basic and acidic residues); that stretch reads QHPEDLVKAE.

It belongs to the complex I 23 kDa subunit family. As to quaternary structure, NDH-1 is composed of at least 11 different subunits. It depends on [4Fe-4S] cluster as a cofactor.

It is found in the cellular thylakoid membrane. It carries out the reaction a plastoquinone + NADH + (n+1) H(+)(in) = a plastoquinol + NAD(+) + n H(+)(out). It catalyses the reaction a plastoquinone + NADPH + (n+1) H(+)(in) = a plastoquinol + NADP(+) + n H(+)(out). Its function is as follows. NDH-1 shuttles electrons from an unknown electron donor, via FMN and iron-sulfur (Fe-S) centers, to quinones in the respiratory and/or the photosynthetic chain. The immediate electron acceptor for the enzyme in this species is believed to be plastoquinone. Couples the redox reaction to proton translocation, and thus conserves the redox energy in a proton gradient. In Synechocystis sp. (strain ATCC 27184 / PCC 6803 / Kazusa), this protein is NAD(P)H-quinone oxidoreductase subunit I.